The primary structure comprises 85 residues: Actobindin homolog (85 aa).

Positions 35 to 52 (DRNELLSGIKEGKELKKA) constitute a WH2 domain.

Is able to bind two actin monomers at high concentrations of G-actin. The polypeptide is Actobindin homolog (Entamoeba histolytica).